Consider the following 511-residue polypeptide: V-type proton ATPase subunit B, brain isoform (511 aa).

Arginine 400 lines the ATP pocket.

Belongs to the ATPase alpha/beta chains family. V-ATPase is a heteromultimeric enzyme made up of two complexes: the ATP-hydrolytic V1 complex and the proton translocation V0 complex. The V1 complex consists of three catalytic AB heterodimers that form a heterohexamer, three peripheral stalks each consisting of EG heterodimers, one central rotor including subunits D and F, and the regulatory subunits C and H. The proton translocation complex V0 consists of the proton transport subunit a, a ring of proteolipid subunits c9c'', rotary subunit d, subunits e and f, and the accessory subunits ATP6AP1/Ac45 and ATP6AP2/PRR.

It localises to the apical cell membrane. Its subcellular location is the melanosome. The protein localises to the cytoplasm. The protein resides in the cytoplasmic vesicle. It is found in the secretory vesicle. It localises to the synaptic vesicle membrane. Its subcellular location is the clathrin-coated vesicle membrane. In terms of biological role, non-catalytic subunit of the V1 complex of vacuolar(H+)-ATPase (V-ATPase), a multisubunit enzyme composed of a peripheral complex (V1) that hydrolyzes ATP and a membrane integral complex (V0) that translocates protons. V-ATPase is responsible for acidifying and maintaining the pH of intracellular compartments and in some cell types, is targeted to the plasma membrane, where it is responsible for acidifying the extracellular environment. In renal intercalated cells, can partially compensate the lack of ATP6V1B1 and mediate secretion of protons (H+) into the urine under base-line conditions but not in conditions of acid load. This Pongo abelii (Sumatran orangutan) protein is V-type proton ATPase subunit B, brain isoform (ATP6V1B2).